The chain runs to 288 residues: Diaminopimelate epimerase (288 aa).

Substrate-binding residues include Asn-17, Gln-47, and Asn-67. Residue Cys-76 is the Proton donor of the active site. Substrate contacts are provided by residues 77 to 78, Asn-164, Asn-197, and 215 to 216; these read GN and ER. Residue Cys-224 is the Proton acceptor of the active site. Substrate is bound at residue 225 to 226; the sequence is GS.

It belongs to the diaminopimelate epimerase family. As to quaternary structure, homodimer.

The protein resides in the cytoplasm. The catalysed reaction is (2S,6S)-2,6-diaminopimelate = meso-2,6-diaminopimelate. It functions in the pathway amino-acid biosynthesis; L-lysine biosynthesis via DAP pathway; DL-2,6-diaminopimelate from LL-2,6-diaminopimelate: step 1/1. In terms of biological role, catalyzes the stereoinversion of LL-2,6-diaminopimelate (L,L-DAP) to meso-diaminopimelate (meso-DAP), a precursor of L-lysine and an essential component of the bacterial peptidoglycan. The sequence is that of Diaminopimelate epimerase from Rhodopseudomonas palustris (strain BisA53).